The sequence spans 774 residues: Polyribonucleotide nucleotidyltransferase (774 aa).

Residues aspartate 485 and aspartate 491 each contribute to the Mg(2+) site. The KH domain maps to 552–611 (PRIETMSVPKDKIRDIIGTGGKIIREIVATTGAKVDIDDDGTVKISSSDTAQIEAARNWI). In terms of domain architecture, S1 motif spans 621 to 689 (GKIYTGKVVN…NRGKVRLSMR (69 aa)). Residues 689 to 774 (RVVDQETGEE…APAFLTRDDD (86 aa)) are disordered. Over residues 700–755 (PDTRPPREERPRGDRGDRGDRGPRRDGDRRREGGDRGPRRDRGDRGDRPRRERSEG) the composition is skewed to basic and acidic residues.

The protein belongs to the polyribonucleotide nucleotidyltransferase family. Mg(2+) serves as cofactor.

It is found in the cytoplasm. The enzyme catalyses RNA(n+1) + phosphate = RNA(n) + a ribonucleoside 5'-diphosphate. Involved in mRNA degradation. Catalyzes the phosphorolysis of single-stranded polyribonucleotides processively in the 3'- to 5'-direction. The sequence is that of Polyribonucleotide nucleotidyltransferase from Rhizorhabdus wittichii (strain DSM 6014 / CCUG 31198 / JCM 15750 / NBRC 105917 / EY 4224 / RW1) (Sphingomonas wittichii).